We begin with the raw amino-acid sequence, 326 residues long: F-box/LRR-repeat protein 12 (326 aa).

The 47-residue stretch at methionine 1–valine 47 folds into the F-box domain. LRR repeat units lie at residues leucine 51–glycine 78, alanine 86–valine 111, aspartate 113–serine 133, valine 161–glycine 185, threonine 186–glycine 211, cysteine 212–threonine 236, valine 237–glycine 261, and proline 266–glycine 291.

In terms of assembly, interacts with SKP1 and CUL1.

It functions in the pathway protein modification; protein ubiquitination. Its function is as follows. Substrate-recognition component of the SCF (SKP1-CUL1-F-box protein)-type E3 ubiquitin ligase complex. Mediates the polyubiquitination and proteasomal degradation of CAMK1 leading to disruption of cyclin D1/CDK4 complex assembly which results in G1 cell cycle arrest in lung epithelia. This Mus musculus (Mouse) protein is F-box/LRR-repeat protein 12 (Fbxl12).